Reading from the N-terminus, the 217-residue chain is tRNA (guanine-N(7)-)-methyltransferase (217 aa).

S-adenosyl-L-methionine is bound by residues Glu46, Glu71, Asp98, and Asp120. Asp120 is a catalytic residue. Residue Lys124 coordinates substrate. An interaction with RNA region spans residues 126–131; the sequence is RHEKRR. Substrate contacts are provided by residues Asp156 and 196 to 199; that span reads TEYE.

It belongs to the class I-like SAM-binding methyltransferase superfamily. TrmB family.

The enzyme catalyses guanosine(46) in tRNA + S-adenosyl-L-methionine = N(7)-methylguanosine(46) in tRNA + S-adenosyl-L-homocysteine. It functions in the pathway tRNA modification; N(7)-methylguanine-tRNA biosynthesis. In terms of biological role, catalyzes the formation of N(7)-methylguanine at position 46 (m7G46) in tRNA. The polypeptide is tRNA (guanine-N(7)-)-methyltransferase (Lactobacillus gasseri (strain ATCC 33323 / DSM 20243 / BCRC 14619 / CIP 102991 / JCM 1131 / KCTC 3163 / NCIMB 11718 / NCTC 13722 / AM63)).